The following is a 186-amino-acid chain: Ribosome-recycling factor (186 aa).

Belongs to the RRF family.

It is found in the cytoplasm. Responsible for the release of ribosomes from messenger RNA at the termination of protein biosynthesis. May increase the efficiency of translation by recycling ribosomes from one round of translation to another. This is Ribosome-recycling factor from Rhodopseudomonas palustris (strain ATCC BAA-98 / CGA009).